The primary structure comprises 287 residues: Probable WRKY transcription factor 57 (287 aa).

The span at 86-99 shows a compositional bias: low complexity; the sequence is TSTNNNPSATSSSS. Positions 86-137 are disordered; that stretch reads TSTNNNPSATSSSSEDPAENSTASAEKTPPPETPVKEKKKAQKRIRQPRFAF. A compositionally biased stretch (basic residues) spans 122–132; sequence EKKKAQKRIRQ. Residues 141–206 constitute a DNA-binding region (WRKY); the sequence is SDVDNLEDGY…YEGQHCHQTI (66 aa). Residues 248 to 287 form a disordered region; it reads DNNAPSPRLPRPTTEDTPAVSTPSEEGLLGDIVPQTMRNP. Residues 262–271 show a composition bias toward polar residues; the sequence is EDTPAVSTPS.

Belongs to the WRKY group II-c family.

Its subcellular location is the nucleus. Its function is as follows. Transcription factor. Interacts specifically with the W box (5'-(T)TGAC[CT]-3'), a frequently occurring elicitor-responsive cis-acting element. This is Probable WRKY transcription factor 57 (WRKY57) from Arabidopsis thaliana (Mouse-ear cress).